The chain runs to 321 residues: 26S proteasome non-ATPase regulatory subunit 7 (321 aa).

One can recognise an MPN domain in the interval 9–144; it reads VVVHPLVLLS…TEAYISVEEV (136 aa). A Glycyl lysine isopeptide (Lys-Gly) (interchain with G-Cter in ubiquitin) cross-link involves residue K180. N6-acetyllysine occurs at positions 204, 214, 313, and 314. The tract at residues 281-321 is disordered; the sequence is ANRDAEKKEGQEKEESKKERKDDKEKEKSDAAKKEEKKEKK.

Belongs to the peptidase M67A family. Component of the 19S proteasome regulatory particle complex. The 26S proteasome consists of a 20S core particle (CP) and two 19S regulatory subunits (RP). The regulatory particle is made of a lid composed of 9 subunits including PSMD7, a base containing 6 ATPases and few additional components. Within the complex, PSMD7 interacts with subunit PSMD4 through their respective MPN domain. Interacts with TRIM5.

In terms of biological role, component of the 26S proteasome, a multiprotein complex involved in the ATP-dependent degradation of ubiquitinated proteins. This complex plays a key role in the maintenance of protein homeostasis by removing misfolded or damaged proteins, which could impair cellular functions, and by removing proteins whose functions are no longer required. Therefore, the proteasome participates in numerous cellular processes, including cell cycle progression, apoptosis, or DNA damage repair. In Mus musculus (Mouse), this protein is 26S proteasome non-ATPase regulatory subunit 7 (Psmd7).